A 261-amino-acid polypeptide reads, in one-letter code: CD40 ligand (261 aa).

Topologically, residues 1-22 are cytoplasmic; the sequence is MIETYSQPSPRSVAAGPPVSMK. Residues 23-43 traverse the membrane as a helical; Signal-anchor for type II membrane protein segment; it reads IFMYLLTVFLITQMIGSALFA. The Extracellular segment spans residues 44 to 240; sequence AYLHRRLDKI…LQPGASVFVN (197 aa). The 140-residue stretch at 122–261 folds into the THD domain; sequence IAAHVISEAS…GFTSFGLLKL (140 aa). A disulfide bridge links Cys178 with Cys218. N-linked (GlcNAc...) asparagine glycosylation occurs at Asn240.

Belongs to the tumor necrosis factor family. In terms of assembly, homotrimer. Interacts with CD28. CD40 ligand, soluble form: Exists as either a monomer or a homotrimer. Forms a ternary complex between CD40 and integrins for CD40-CD40LG signaling. Post-translationally, the soluble form derives from the membrane form by proteolytic processing.

The protein resides in the cell membrane. It is found in the cell surface. The protein localises to the secreted. Its function is as follows. Cytokine that acts as a ligand to CD40/TNFRSF5. Costimulates T-cell proliferation and cytokine production. Its cross-linking on T-cells generates a costimulatory signal which enhances the production of IL4 and IL10 in conjunction with the TCR/CD3 ligation and CD28 costimulation. Induces the activation of NF-kappa-B. Induces the activation of kinases MAPK8 and PAK2 in T-cells. Mediates B-cell proliferation in the absence of co-stimulus as well as IgE production in the presence of IL4. Involved in immunoglobulin class switching. Acts as a ligand for integrins, specifically ITGA5:ITGB1 and ITGAV:ITGB3; both integrins and the CD40 receptor are required for activation of CD40-CD40LG signaling, which have cell-type dependent effects, such as B-cell activation, NF-kappa-B signaling and anti-apoptotic signaling. The protein is CD40 ligand (CD40LG) of Sus scrofa (Pig).